Here is a 354-residue protein sequence, read N- to C-terminus: MHFTSSLLALVALTTQALAFPLNDLPKRDSGLAVKLSSIGNTRVKAVITNTADHEISFLKFNTFFDSSATRKVSIAKDGSVVPFNGLYRYYNAAKLPKEAFKTLAPGASAEATFDIAETSDLSAGGSFSVFSDGMIPVADGSGTTLTGAIKYSTNELKMNVDGALAAKVQSAIPKLEKRTRIDPDCPGEYRNVLTQGLQTAAGYASRAAEAATNGDQLEEFFKTTDQQTAQNIAQRFQAIAQECGSDSQGSTTYFCDDRFNGCEQGVIAYTIPAQSVVVNCPAYWELPPVVNQGLDPDHGYVVVHEFTHATSIFSPGTQDHAYGYENCIRLSPEQCISNADNYSLYAASVSRGG.

The first 19 residues, M1–A19, serve as a signal peptide directing secretion. Positions F20–R179 are excised as a propeptide. 2 disulfide bridges follow: C186-C256 and C263-C281. Position 305 (H305) interacts with Zn(2+). The active site involves E306. H309 and D320 together coordinate Zn(2+).

Belongs to the peptidase M35 family. It depends on Zn(2+) as a cofactor.

Its subcellular location is the secreted. It carries out the reaction Preferential cleavage of bonds with hydrophobic residues in P1'. Also 3-Asn-|-Gln-4 and 8-Gly-|-Ser-9 bonds in insulin B chain.. In terms of biological role, secreted metalloproteinase that allows assimilation of proteinaceous substrates. Shows high activities on basic nuclear substrates such as histone and protamine. May be involved in virulence. The sequence is that of Neutral protease 2 homolog MEP3 (MEP3) from Coccidioides posadasii (strain C735) (Valley fever fungus).